The chain runs to 424 residues: O-methyltransferase bfoD (424 aa).

S-adenosyl-L-methionine is bound at residue aspartate 275. Histidine 326 serves as the catalytic Proton acceptor.

It belongs to the class I-like SAM-binding methyltransferase superfamily. Cation-independent O-methyltransferase family.

It functions in the pathway secondary metabolite biosynthesis. In terms of biological role, cytochrome P450 monooxygenase; part of the gene cluster that mediates the biosynthesis of bifonsecin B, a dimeric gamma-naphthopyrone. The first step in the biosynthesis of bifonsecin B is the production of gamma-naphthopyrone precursor YWA1 by the non-reducing polyketide synthase albA, via condensation of one acetyl-CoA starter unit with 6 malonyl-CoA units. YWA1 is then methylated by bfoE at position C-6 to yield foncesin which is further methylated at position C-8 by bfoD to produce fonsecin B. A key enzyme in the biosynthetic pathway is the cytochrome P450 monooxygenase bfoB which catalyzes the oxidative dimerization of fonsecin B to bifonsecin B. Bfob also catalyzes the oxidative dimerization of rubrofusarin B into nigerone. The stereoselectivity of bfoB is influenced by the two natural monomeric substrates; homodimerization of fonsecin B yields a stereochemically pure biaryl, M-foncerine B, while rubrofusarin B yields a mixture of enantiomers M- and P-nigerone. The protein is O-methyltransferase bfoD of Aspergillus brasiliensis (strain CBS 101740 / IMI 381727 / IBT 21946).